The following is a 151-amino-acid chain: Large ribosomal subunit protein bL9 (151 aa).

This sequence belongs to the bacterial ribosomal protein bL9 family.

Its function is as follows. Binds to the 23S rRNA. The sequence is that of Large ribosomal subunit protein bL9 from Bordetella avium (strain 197N).